Consider the following 284-residue polypeptide: uncharacterized protein (284 aa).

The first 23 residues, 1–23 (MKRGCAIAVMICGLITSVSAASA), serve as a signal peptide directing secretion.

It belongs to the surface antigen msp4 family.

This is an uncharacterized protein from Brucella suis biovar 1 (strain 1330).